Reading from the N-terminus, the 198-residue chain is Mediator of RNA polymerase II transcription subunit 20 (198 aa).

It belongs to the Mediator complex subunit 20 family. Component of the Mediator complex.

It is found in the nucleus. In terms of biological role, component of the Mediator complex, a coactivator involved in the regulated transcription of nearly all RNA polymerase II-dependent genes. Mediator functions as a bridge to convey information from gene-specific regulatory proteins to the basal RNA polymerase II transcription machinery. Mediator is recruited to promoters by direct interactions with regulatory proteins and serves as a scaffold for the assembly of a functional preinitiation complex with RNA polymerase II and the general transcription factors. This chain is Mediator of RNA polymerase II transcription subunit 20 (mdt-20), found in Caenorhabditis briggsae.